We begin with the raw amino-acid sequence, 282 residues long: Large ribosomal subunit protein uL2 (282 aa).

2 disordered regions span residues 31-56 (EKSLLDSQSHSAGRNNAGKMTVRHRG) and 226-282 (SVMN…GSKM). The span at 35 to 44 (LDSQSHSAGR) shows a compositional bias: polar residues. Residues 257–266 (TVGKKTRSKK) are compositionally biased toward basic residues.

Belongs to the universal ribosomal protein uL2 family. As to quaternary structure, part of the 50S ribosomal subunit. Forms a bridge to the 30S subunit in the 70S ribosome.

Its function is as follows. One of the primary rRNA binding proteins. Required for association of the 30S and 50S subunits to form the 70S ribosome, for tRNA binding and peptide bond formation. It has been suggested to have peptidyltransferase activity; this is somewhat controversial. Makes several contacts with the 16S rRNA in the 70S ribosome. This Levilactobacillus brevis (strain ATCC 367 / BCRC 12310 / CIP 105137 / JCM 1170 / LMG 11437 / NCIMB 947 / NCTC 947) (Lactobacillus brevis) protein is Large ribosomal subunit protein uL2.